A 224-amino-acid chain; its full sequence is Probable 2-phosphosulfolactate phosphatase (224 aa).

Belongs to the ComB family. The cofactor is Mg(2+).

It carries out the reaction (2R)-O-phospho-3-sulfolactate + H2O = (2R)-3-sulfolactate + phosphate. This is Probable 2-phosphosulfolactate phosphatase from Pseudothermotoga lettingae (strain ATCC BAA-301 / DSM 14385 / NBRC 107922 / TMO) (Thermotoga lettingae).